Here is a 193-residue protein sequence, read N- to C-terminus: dCTP deaminase (193 aa).

Residues 110–115 (RSSLAR), Asp128, 136–138 (VLE), Tyr171, Lys178, and Gln182 contribute to the dCTP site. The Proton donor/acceptor role is filled by Glu138. The segment at 169-193 (RPYNSRQDAKYKGQQGAVASRIDKD) is disordered.

Belongs to the dCTP deaminase family. In terms of assembly, homotrimer.

The enzyme catalyses dCTP + H2O + H(+) = dUTP + NH4(+). It functions in the pathway pyrimidine metabolism; dUMP biosynthesis; dUMP from dCTP (dUTP route): step 1/2. Catalyzes the deamination of dCTP to dUTP. This Erwinia tasmaniensis (strain DSM 17950 / CFBP 7177 / CIP 109463 / NCPPB 4357 / Et1/99) protein is dCTP deaminase.